Consider the following 590-residue polypeptide: Polypeptide N-acetylgalactosaminyltransferase 8 (590 aa).

The Cytoplasmic portion of the chain corresponds to 1-11; the sequence is MCLDIWRHKKK. The chain crosses the membrane as a helical; Signal-anchor for type II membrane protein span at residues 12-31; it reads VLPLLLLMAIGSIIYYLYTL. The Lumenal segment spans residues 32 to 590; it reads KLEGERDESA…QHFWDNVKTQ (559 aa). Asparagine 77 carries an N-linked (GlcNAc...) asparagine glycan. Disulfide bonds link cysteine 117-cysteine 345, cysteine 336-cysteine 419, cysteine 459-cysteine 475, cysteine 502-cysteine 517, and cysteine 546-cysteine 561. Positions 127 to 236 are catalytic subdomain A; it reads LPSVSVVITY…KGWLEPLIAP (110 aa). A substrate-binding site is contributed by aspartate 168. Aspartate 220 is a Mn(2+) binding site. Position 221 (serine 221) interacts with substrate. Residue histidine 222 participates in Mn(2+) binding. An N-linked (GlcNAc...) asparagine glycan is attached at asparagine 241. The segment at 291–353 is catalytic subdomain B; sequence PHKNPIMNGG…PCSRVGHLFR (63 aa). Tryptophan 322 is a substrate binding site. Position 350 (histidine 350) interacts with Mn(2+). A substrate-binding site is contributed by arginine 353. Residues 446–573 enclose the Ricin B-type lectin domain; sequence ASGVLQSISS…KNHKQQWKFG (128 aa).

It belongs to the glycosyltransferase 2 family. GalNAc-T subfamily. Requires Mn(2+) as cofactor. As to expression, expressed in developing oocytes and egg chambers. During embryonic stages 9-11, expressed in the primordium of the foregut, midgut and hindgut. During embryonic stages 12-13, expressed in the posterior midgut and hindgut. During embryonic stages 14-15, expression continues in the hindgut. No expression detected during embryonic stages 16-17 or in third instar larvae imaginal disks.

It localises to the golgi apparatus membrane. It catalyses the reaction L-seryl-[protein] + UDP-N-acetyl-alpha-D-galactosamine = a 3-O-[N-acetyl-alpha-D-galactosaminyl]-L-seryl-[protein] + UDP + H(+). The enzyme catalyses L-threonyl-[protein] + UDP-N-acetyl-alpha-D-galactosamine = a 3-O-[N-acetyl-alpha-D-galactosaminyl]-L-threonyl-[protein] + UDP + H(+). The protein operates within protein modification; protein glycosylation. Its function is as follows. Catalyzes the initial reaction in O-linked oligosaccharide biosynthesis, the transfer of an N-acetyl-D-galactosamine residue to a serine or threonine residue on the protein receptor. It can both act as a peptide transferase that transfers GalNAc onto unmodified peptide substrates, and as a glycopeptide transferase that requires the prior addition of a GalNAc on a peptide before adding additional GalNAc moieties. Prefers both EA2 and the diglycosylated Muc5AC-3/13 as substrates, albeit at very low levels fro Muc5AC-3/13. The polypeptide is Polypeptide N-acetylgalactosaminyltransferase 8 (Drosophila melanogaster (Fruit fly)).